The following is a 227-amino-acid chain: Uracil-DNA glycosylase (227 aa).

Aspartate 68 serves as the catalytic Proton acceptor.

Belongs to the uracil-DNA glycosylase (UDG) superfamily. UNG family.

It is found in the cytoplasm. The enzyme catalyses Hydrolyzes single-stranded DNA or mismatched double-stranded DNA and polynucleotides, releasing free uracil.. In terms of biological role, excises uracil residues from the DNA which can arise as a result of misincorporation of dUMP residues by DNA polymerase or due to deamination of cytosine. This chain is Uracil-DNA glycosylase, found in Mycolicibacterium paratuberculosis (strain ATCC BAA-968 / K-10) (Mycobacterium paratuberculosis).